The primary structure comprises 349 residues: Inositol-tetrakisphosphate 1-kinase 2 (349 aa).

Positions 48 and 90 each coordinate 1D-myo-inositol 1,3,4-trisphosphate. ATP contacts are provided by Arg-125 and Lys-175. His-186 and Lys-218 together coordinate 1D-myo-inositol 1,3,4-trisphosphate. ATP contacts are provided by residues 207 to 218 and Ser-233; that span reads QEFVNHGGILFK. Residues Asp-298, Asp-313, and Asn-315 each coordinate Mg(2+). A 1D-myo-inositol 1,3,4-trisphosphate-binding site is contributed by Asn-315.

The protein belongs to the ITPK1 family. Monomer. It depends on Mg(2+) as a cofactor.

It catalyses the reaction 1D-myo-inositol 3,4,5,6-tetrakisphosphate + ATP = 1D-myo-inositol 1,3,4,5,6-pentakisphosphate + ADP + H(+). The enzyme catalyses 1D-myo-inositol 1,3,4-trisphosphate + ATP = 1D-myo-inositol 1,3,4,5-tetrakisphosphate + ADP + H(+). It carries out the reaction 1D-myo-inositol 1,3,4-trisphosphate + ATP = 1D-myo-inositol 1,3,4,6-tetrakisphosphate + ADP + H(+). In terms of biological role, kinase that can phosphorylate various inositol polyphosphate such as Ins(3,4,5,6)P4 or Ins(1,3,4)P3 and participates in phytic acid biosynthesis in developing seeds. Phytic acid is the primary storage form of phosphorus in cereal grains and other plant seeds. This is Inositol-tetrakisphosphate 1-kinase 2 (ITPK2) from Oryza sativa subsp. indica (Rice).